The sequence spans 314 residues: Replication initiation protein (314 aa).

Over residues 1-10 (MSKNNHANHS) the composition is skewed to polar residues. Residues 1–25 (MSKNNHANHSNHLENHDLDNFSKTG) are disordered. Over residues 11 to 20 (NHLENHDLDN) the composition is skewed to basic and acidic residues.

This sequence belongs to the plasmid replication initiation factor family.

This protein is probably a specific topoisomerase involved in initiating replication. This protein is specifically required and may be rate-limiting for replication of the plasmid in vivo. The polypeptide is Replication initiation protein (repN) (Staphylococcus aureus).